Consider the following 220-residue polypeptide: Deoxyribose-phosphate aldolase (220 aa).

The Proton donor/acceptor role is filled by aspartate 89. The active-site Schiff-base intermediate with acetaldehyde is lysine 151. Catalysis depends on lysine 180, which acts as the Proton donor/acceptor.

Belongs to the DeoC/FbaB aldolase family. DeoC type 1 subfamily.

The protein resides in the cytoplasm. The enzyme catalyses 2-deoxy-D-ribose 5-phosphate = D-glyceraldehyde 3-phosphate + acetaldehyde. The protein operates within carbohydrate degradation; 2-deoxy-D-ribose 1-phosphate degradation; D-glyceraldehyde 3-phosphate and acetaldehyde from 2-deoxy-alpha-D-ribose 1-phosphate: step 2/2. In terms of biological role, catalyzes a reversible aldol reaction between acetaldehyde and D-glyceraldehyde 3-phosphate to generate 2-deoxy-D-ribose 5-phosphate. The chain is Deoxyribose-phosphate aldolase from Streptococcus pneumoniae serotype 2 (strain D39 / NCTC 7466).